A 183-amino-acid polypeptide reads, in one-letter code: Calcium-binding protein M (183 aa).

Glycine 2 is lipidated: N-myristoyl glycine. EF-hand domains follow at residues glutamate 25 to asparagine 60, tyrosine 61 to glycine 96, serine 97 to valine 132, and aspartate 142 to leucine 177. Aspartate 74, aspartate 76, serine 78, threonine 80, glutamate 85, aspartate 110, aspartate 112, serine 114, glutamate 121, aspartate 155, aspartate 157, asparagine 159, and glutamate 166 together coordinate Ca(2+).

It belongs to the recoverin family.

This Dictyostelium discoideum (Social amoeba) protein is Calcium-binding protein M (cbpM).